The chain runs to 364 residues: BOLA class I histocompatibility antigen, alpha chain BL3-7 (364 aa).

The first 27 residues, 1-27 (MRVMRVMRPRTLLLLLSGVLVLTETLA), serve as a signal peptide directing secretion. The alpha-1 stretch occupies residues 28 to 117 (GSHSLRYFYT…LRGYYNQSET (90 aa)). Residues 28 to 310 (GSHSLRYFYT…WEPPQTSFLI (283 aa)) are Extracellular-facing. N113 is a glycosylation site (N-linked (GlcNAc...) asparagine). The alpha-2 stretch occupies residues 118 to 209 (GSHNIQAMYG…ENGKDTLLRA (92 aa)). Intrachain disulfides connect C128–C191 and C230–C286. An alpha-3 region spans residues 210–301 (DPPKAHVTHH…GLQEPLTLRW (92 aa)). Positions 212-298 (PKAHVTHHSI…QHEGLQEPLT (87 aa)) constitute an Ig-like C1-type domain. The interval 302-310 (EPPQTSFLI) is connecting peptide. A helical membrane pass occupies residues 311–331 (MGIIVGLVLLVVALVAGAVIW). Topologically, residues 332 to 364 (RKKRSGEKGRIYTQAASSDSAQGSDVSLTVPKV) are cytoplasmic. Residues S355 and S358 each carry the phosphoserine modification.

This sequence belongs to the MHC class I family. Heterodimer of an alpha chain and a beta chain (beta-2-microglobulin).

The protein resides in the membrane. Involved in the presentation of foreign antigens to the immune system. The chain is BOLA class I histocompatibility antigen, alpha chain BL3-7 from Bos taurus (Bovine).